The following is a 428-amino-acid chain: Adenylosuccinate synthetase (428 aa).

GTP contacts are provided by residues 12–18 (GDEGKGK) and 40–42 (GHT). Residue D13 is the Proton acceptor of the active site. Mg(2+) is bound by residues D13 and G40. IMP contacts are provided by residues 13 to 16 (DEGK), 38 to 41 (NAGH), T130, R144, Q225, T240, and R304. The active-site Proton donor is H41. 300–306 (TTTGRPR) contacts substrate. GTP is bound by residues R306, 332–334 (KLD), and 414–416 (SVG).

It belongs to the adenylosuccinate synthetase family. In terms of assembly, homodimer. Mg(2+) is required as a cofactor.

It localises to the cytoplasm. It catalyses the reaction IMP + L-aspartate + GTP = N(6)-(1,2-dicarboxyethyl)-AMP + GDP + phosphate + 2 H(+). Its pathway is purine metabolism; AMP biosynthesis via de novo pathway; AMP from IMP: step 1/2. Plays an important role in the de novo pathway of purine nucleotide biosynthesis. Catalyzes the first committed step in the biosynthesis of AMP from IMP. This is Adenylosuccinate synthetase from Caldanaerobacter subterraneus subsp. tengcongensis (strain DSM 15242 / JCM 11007 / NBRC 100824 / MB4) (Thermoanaerobacter tengcongensis).